The primary structure comprises 355 residues: 45 kDa calcium-binding protein (355 aa).

An N-terminal signal peptide occupies residues 1 to 29 (MASRQAPLCGLAPCCLWLLGVVLLMNASA). N-linked (GlcNAc...) asparagine glycosylation occurs at Asn33. 2 EF-hand domains span residues 91-126 (KSRR…KTAE) and 130-165 (EAVA…TKGH). Ser92 carries the post-translational modification Phosphoserine. Asp104, Asn106, Asp108, Arg110, Glu115, Asp143, Asp145, Asp147, His149, and Glu154 together coordinate Ca(2+). 2 positions are modified to phosphothreonine: Thr186 and Thr210. 3 EF-hand domains span residues 226–261 (MLQF…TVEN), 271–306 (WVRD…MNEF), and 307–342 (SALN…FTGS). Ca(2+)-binding residues include Asp239, Asp241, Asp243, Lys245, and Glu250. Position 258 is a phosphothreonine (Thr258). Asp284, Asn286, and Asp288 together coordinate Ca(2+). Thr292 is modified (phosphothreonine). Ca(2+) is bound by residues Glu295, Asp320, Asn322, Asn324, Tyr326, and Glu331. The necessary for intracellular retention in Golgi apparatus lumen stretch occupies residues 302–355 (PMNEFSALNEAKQMIAIADENQNHYLEPEEVLKYSEFFTGSKLVDYARSVHEEF).

This sequence belongs to the CREC family.

The protein localises to the golgi apparatus lumen. Its function is as follows. May regulate calcium-dependent activities in the endoplasmic reticulum lumen or post-ER compartment. The chain is 45 kDa calcium-binding protein (SDF4) from Bos taurus (Bovine).